Consider the following 371-residue polypeptide: Diguanylate cyclase A (371 aa).

The 134-residue stretch at glutamate 233–asparagine 366 folds into the GGDEF domain. Mg(2+)-binding residues include aspartate 241, isoleucine 242, and glutamate 284. Glutamate 284 (proton acceptor) is an active-site residue.

In terms of assembly, exists as a homodimer and as larger aggregates. Both dimers and aggregates possess DGC activity. Mg(2+) serves as cofactor. It depends on Mn(2+) as a cofactor.

The protein localises to the cytoplasm. The enzyme catalyses 2 GTP = 3',3'-c-di-GMP + 2 diphosphate. With respect to regulation, allosterically regulated by a feedback inhibition loop. Catalyzes the conversion of GTP to cyclic-di-GMP (c-di-GMP). Shows activity under aerobic and anaerobic reaction conditions. In Treponema denticola (strain ATCC 35405 / DSM 14222 / CIP 103919 / JCM 8153 / KCTC 15104), this protein is Diguanylate cyclase A.